Here is a 98-residue protein sequence, read N- to C-terminus: C-X-C motif chemokine 10 (98 aa).

The signal sequence occupies residues 1-21 (MNQSAVLIFCLIFLTLNGTQG). R26 carries the citrulline modification. Cystine bridges form between C30–C57 and C32–C74.

Belongs to the intercrine alpha (chemokine CxC) family. In terms of assembly, monomer, dimer, and tetramer. Interacts with CXCR3 (via N-terminus).

Its subcellular location is the secreted. Pro-inflammatory cytokine that is involved in a wide variety of processes such as chemotaxis, differentiation, and activation of peripheral immune cells, regulation of cell growth, apoptosis and modulation of angiostatic effects. Plays thereby an important role during viral infections by stimulating the activation and migration of immune cells to the infected sites. Mechanistically, binding of CXCL10 to the CXCR3 receptor activates G protein-mediated signaling and results in downstream activation of phospholipase C-dependent pathway, an increase in intracellular calcium production and actin reorganization. In turn, recruitment of activated Th1 lymphocytes occurs at sites of inflammation. Activation of the CXCL10/CXCR3 axis also plays an important role in neurons in response to brain injury for activating microglia, the resident macrophage population of the central nervous system, and directing them to the lesion site. This recruitment is an essential element for neuronal reorganization. The sequence is that of C-X-C motif chemokine 10 (CXCL10) from Canis lupus familiaris (Dog).